The primary structure comprises 315 residues: L-lactate dehydrogenase (315 aa).

NAD(+)-binding positions include valine 16, aspartate 37, and 81–82 (GA). Substrate is bound by residues glutamine 84, arginine 90, and 122–125 (NPVD). Residues 120-122 (VSN) and serine 145 each bind NAD(+). 150 to 153 (DTAR) is a binding site for substrate. The beta-D-fructose 1,6-bisphosphate site is built by arginine 155 and histidine 170. Residue histidine 177 is the Proton acceptor of the active site. Tyrosine 224 carries the post-translational modification Phosphotyrosine. Residue threonine 233 coordinates substrate.

It belongs to the LDH/MDH superfamily. LDH family. In terms of assembly, homotetramer.

Its subcellular location is the cytoplasm. It carries out the reaction (S)-lactate + NAD(+) = pyruvate + NADH + H(+). It participates in fermentation; pyruvate fermentation to lactate; (S)-lactate from pyruvate: step 1/1. With respect to regulation, allosterically activated by fructose 1,6-bisphosphate (FBP). In terms of biological role, catalyzes the conversion of lactate to pyruvate. This is L-lactate dehydrogenase from Treponema denticola (strain ATCC 35405 / DSM 14222 / CIP 103919 / JCM 8153 / KCTC 15104).